Here is a 125-residue protein sequence, read N- to C-terminus: uncharacterized protein (125 aa).

To transposase of insertion sequence IS6501.

This is an uncharacterized protein from Sinorhizobium fredii (strain NBRC 101917 / NGR234).